Here is a 1623-residue protein sequence, read N- to C-terminus: ATP-binding cassette sub-family A member 9 (1623 aa).

A helical transmembrane segment spans residues 31–51 (LLEWLFSLLLILFVYQLSSNL). Asn120 is a glycosylation site (N-linked (GlcNAc...) asparagine). A run of 6 helical transmembrane segments spans residues 225–245 (FFIF…SVNI), 265–285 (AFWL…AVLM), 295–315 (VVLT…LSLI), 329–349 (FLTG…GFTA), 354–374 (LPAF…TTGM), and 398–418 (LIMA…VLAL). Residues 481-716 (IRIKNLKKEY…WGIGYHLSLH (236 aa)) form the ABC transporter 1 domain. 517 to 524 (GHSGAGKT) provides a ligand contact to ATP. 7 helical membrane passes run 863–883 (LMTV…EHLV), 1025–1045 (AFFW…GSIS), 1071–1091 (LVDI…DSVF), 1107–1127 (IPCS…ISFI), 1135–1155 (SGIW…ATDI), 1163–1183 (LLIC…LIFS), and 1199–1219 (QLVF…FFIL). The ABC transporter 2 domain occupies 1287–1520 (LRKEYIGRTK…FGKDYLLEMK (234 aa)). 1325-1332 (GHNGAGKS) serves as a coordination point for ATP.

The protein belongs to the ABC transporter superfamily. ABCA family. As to expression, highly expressed in heart and to lower extent in kidney, brain and spleen. Weakly expressed in developing and adult brains. Weakly expressed in the cerebellar granular layer at P14 and P21.

The protein resides in the membrane. Transporter that may play a role in monocyte differentiation and lipid transport and homeostasis. The chain is ATP-binding cassette sub-family A member 9 (Abca9) from Mus musculus (Mouse).